We begin with the raw amino-acid sequence, 399 residues long: N-acetylglucosamine-6-phosphate deacetylase (399 aa).

The a divalent metal cation site is built by histidine 65, histidine 67, and glutamate 135. Residue 146 to 147 (AH) participates in substrate binding. A divalent metal cation-binding residues include histidine 201 and histidine 222. Residues 225 to 226 (NG), arginine 233, and 254 to 257 (DGHH) contribute to the substrate site. A divalent metal cation is bound at residue aspartate 279. The active-site Proton donor/acceptor is the aspartate 279. Residue 312 to 314 (LAG) coordinates substrate.

Belongs to the metallo-dependent hydrolases superfamily. NagA family. As to quaternary structure, homodimer. The cofactor is a divalent metal cation.

The catalysed reaction is N-acetyl-D-glucosamine 6-phosphate + H2O = D-glucosamine 6-phosphate + acetate. It participates in amino-sugar metabolism; N-acetylneuraminate degradation; D-fructose 6-phosphate from N-acetylneuraminate: step 4/5. Functionally, involved in the first committed step in the biosynthesis of amino-sugar-nucleotides. Catalyzes the hydrolysis of the N-acetyl group of N-acetylglucosamine-6-phosphate (GlcNAc-6-P) to yield glucosamine 6-phosphate and acetate. The protein is N-acetylglucosamine-6-phosphate deacetylase (manD) of Vibrio furnissii.